Here is a 187-residue protein sequence, read N- to C-terminus: Ribosome-recycling factor (187 aa).

This sequence belongs to the RRF family.

Its subcellular location is the cytoplasm. Responsible for the release of ribosomes from messenger RNA at the termination of protein biosynthesis. May increase the efficiency of translation by recycling ribosomes from one round of translation to another. This chain is Ribosome-recycling factor, found in Petrotoga mobilis (strain DSM 10674 / SJ95).